Consider the following 767-residue polypeptide: 5-methyltetrahydropteroyltriglutamate--homocysteine methyltransferase (767 aa).

Residues 17 to 20 (RELK) and K117 contribute to the 5-methyltetrahydropteroyltri-L-glutamate site. L-homocysteine contacts are provided by residues 441-443 (IGS) and E494. Residues 441–443 (IGS) and E494 each bind L-methionine. 5-methyltetrahydropteroyltri-L-glutamate is bound by residues 525-526 (RC) and W571. Residue D609 coordinates L-homocysteine. L-methionine is bound at residue D609. Residue E615 coordinates 5-methyltetrahydropteroyltri-L-glutamate. Zn(2+) is bound by residues H652, C654, and E676. Catalysis depends on H705, which acts as the Proton donor. C737 serves as a coordination point for Zn(2+).

The protein belongs to the vitamin-B12 independent methionine synthase family. Zn(2+) serves as cofactor.

It carries out the reaction 5-methyltetrahydropteroyltri-L-glutamate + L-homocysteine = tetrahydropteroyltri-L-glutamate + L-methionine. The protein operates within amino-acid biosynthesis; L-methionine biosynthesis via de novo pathway; L-methionine from L-homocysteine (MetE route): step 1/1. In terms of biological role, catalyzes the transfer of a methyl group from 5-methyltetrahydrofolate to homocysteine resulting in methionine formation. The protein is 5-methyltetrahydropteroyltriglutamate--homocysteine methyltransferase of Bifidobacterium longum (strain NCC 2705).